A 375-amino-acid chain; its full sequence is tRNA-specific 2-thiouridylase MnmA (375 aa).

ATP contacts are provided by residues 16–23 (GMSGGVDS) and Met42. An interaction with target base in tRNA region spans residues 102 to 104 (NPD). Cys107 functions as the Nucleophile in the catalytic mechanism. A disulfide bridge connects residues Cys107 and Cys203. Gly131 contributes to the ATP binding site. Residues 153-155 (KDQ) are interaction with tRNA. Cys203 (cysteine persulfide intermediate) is an active-site residue. The interaction with tRNA stretch occupies residues 315–316 (RY).

This sequence belongs to the MnmA/TRMU family.

It localises to the cytoplasm. It catalyses the reaction S-sulfanyl-L-cysteinyl-[protein] + uridine(34) in tRNA + AH2 + ATP = 2-thiouridine(34) in tRNA + L-cysteinyl-[protein] + A + AMP + diphosphate + H(+). Functionally, catalyzes the 2-thiolation of uridine at the wobble position (U34) of tRNA, leading to the formation of s(2)U34. The polypeptide is tRNA-specific 2-thiouridylase MnmA (Pseudomonas aeruginosa (strain UCBPP-PA14)).